The chain runs to 730 residues: UvrABC system protein C (730 aa).

Residues 16 to 95 enclose the GIY-YIG domain; sequence AAPGVYKFRD…IKEFDPRFNV (80 aa). In terms of domain architecture, UVR spans 208–243; that stretch reads DKLVKDLEKRMQQASEDLDFETAARLRDDIGALRKA. Positions 678-730 are disordered; sequence ARALPAAVGDDELDKESESSVTSADAPSAESGSGDEGSESRELSMPTTGPSAQ.

The protein belongs to the UvrC family. In terms of assembly, interacts with UvrB in an incision complex.

It localises to the cytoplasm. Its function is as follows. The UvrABC repair system catalyzes the recognition and processing of DNA lesions. UvrC both incises the 5' and 3' sides of the lesion. The N-terminal half is responsible for the 3' incision and the C-terminal half is responsible for the 5' incision. In Rhodococcus erythropolis (strain PR4 / NBRC 100887), this protein is UvrABC system protein C.